Reading from the N-terminus, the 527-residue chain is Putative ABC transporter peptide-binding protein BMEII0859 (527 aa).

Positions 1–23 (MRLRNFYSALALSAAVFAGPLYA) are cleaved as a signal peptide.

Belongs to the bacterial solute-binding protein 5 family. The complex is composed of two ATP-binding proteins (BMEII0863 and BMEII0864), two transmembrane proteins (BMEII0860 and BMEII0861) and a solute-binding protein (BMEII0859).

It is found in the periplasm. Probably part of an ABC transporter complex that could be involved in peptide import. In Brucella melitensis biotype 1 (strain ATCC 23456 / CCUG 17765 / NCTC 10094 / 16M), this protein is Putative ABC transporter peptide-binding protein BMEII0859.